We begin with the raw amino-acid sequence, 96 residues long: Putative membrane protein insertion efficiency factor (96 aa).

The segment covering 71–84 has biased composition (low complexity); it reads THGTAAAPPASAAP. The tract at residues 71 to 96 is disordered; it reads THGTAAAPPASAAPGRPPVTVRLPRP.

Belongs to the UPF0161 family.

The protein resides in the cell inner membrane. Could be involved in insertion of integral membrane proteins into the membrane. This chain is Putative membrane protein insertion efficiency factor, found in Cupriavidus metallidurans (strain ATCC 43123 / DSM 2839 / NBRC 102507 / CH34) (Ralstonia metallidurans).